The chain runs to 206 residues: Holliday junction branch migration complex subunit RuvA (206 aa).

The interval 1–64 is domain I; that stretch reads MIGRLSGTIL…EDAQLLYGFN (64 aa). The tract at residues 65–143 is domain II; the sequence is KKSERELFRE…GWGEGDLFTP (79 aa). The flexible linker stretch occupies residues 144–157; it reads ASDAAASNAEIQKY. A domain III region spans residues 158–206; that stretch reads SSARAEDEAVSALIALGYKALQAAKVVSQVVKPEMSSENIIREALRSMV.

The protein belongs to the RuvA family. In terms of assembly, homotetramer. Forms an RuvA(8)-RuvB(12)-Holliday junction (HJ) complex. HJ DNA is sandwiched between 2 RuvA tetramers; dsDNA enters through RuvA and exits via RuvB. An RuvB hexamer assembles on each DNA strand where it exits the tetramer. Each RuvB hexamer is contacted by two RuvA subunits (via domain III) on 2 adjacent RuvB subunits; this complex drives branch migration. In the full resolvosome a probable DNA-RuvA(4)-RuvB(12)-RuvC(2) complex forms which resolves the HJ.

It localises to the cytoplasm. Its function is as follows. The RuvA-RuvB-RuvC complex processes Holliday junction (HJ) DNA during genetic recombination and DNA repair, while the RuvA-RuvB complex plays an important role in the rescue of blocked DNA replication forks via replication fork reversal (RFR). RuvA specifically binds to HJ cruciform DNA, conferring on it an open structure. The RuvB hexamer acts as an ATP-dependent pump, pulling dsDNA into and through the RuvAB complex. HJ branch migration allows RuvC to scan DNA until it finds its consensus sequence, where it cleaves and resolves the cruciform DNA. The sequence is that of Holliday junction branch migration complex subunit RuvA from Photobacterium profundum (strain SS9).